The following is a 229-amino-acid chain: Peptidase E (229 aa).

Residues Ser120, Asp135, and His157 each act as charge relay system in the active site.

It belongs to the peptidase S51 family.

Its subcellular location is the cytoplasm. The enzyme catalyses Dipeptidase E catalyzes the hydrolysis of dipeptides Asp-|-Xaa. It does not act on peptides with N-terminal Glu, Asn or Gln, nor does it cleave isoaspartyl peptides.. Its function is as follows. Hydrolyzes dipeptides containing N-terminal aspartate residues. May play a role in allowing the cell to use peptide aspartate to spare carbon otherwise required for the synthesis of the aspartate family of amino acids. The sequence is that of Peptidase E from Shigella flexneri serotype 5b (strain 8401).